Here is a 313-residue protein sequence, read N- to C-terminus: Porphobilinogen deaminase (313 aa).

Position 242 is an S-(dipyrrolylmethanemethyl)cysteine (Cys-242).

This sequence belongs to the HMBS family. Monomer. Requires dipyrromethane as cofactor.

The catalysed reaction is 4 porphobilinogen + H2O = hydroxymethylbilane + 4 NH4(+). The protein operates within porphyrin-containing compound metabolism; protoporphyrin-IX biosynthesis; coproporphyrinogen-III from 5-aminolevulinate: step 2/4. Tetrapolymerization of the monopyrrole PBG into the hydroxymethylbilane pre-uroporphyrinogen in several discrete steps. In Pseudomonas putida (strain ATCC 47054 / DSM 6125 / CFBP 8728 / NCIMB 11950 / KT2440), this protein is Porphobilinogen deaminase.